The primary structure comprises 563 residues: L-lactate permease (563 aa).

The next 14 membrane-spanning stretches (helical) occupy residues 14-34, 37-57, 73-93, 131-151, 157-177, 194-214, 220-240, 249-269, 304-324, 381-401, 419-439, 448-468, 506-526, and 542-562; these read LLLSALAALVPIIFFFWALAI, MKGYTAGLATLGIALIIAVLV, AVYGLLPIGWIIVTSVFLYKI, GAAGFGAPVAISAALLVGLGF, AGICLIANTAPVAFGAIGIPI, MVGRQLPFLSVFIPLYLIIIM, ALEIWPAILVSGVSFAVVQYL, LPDVLSALVSMAALAVFLKWW, IFKAWSPFLLLTAMISVWGIP, LGSAGTAILIAAVLSKFITAI, LPILTIASVVGFAYVTNSSGM, ALTGSMFTFFSPVLGWLGVFI, VTGKMISPQSIAVACAAVGLA, and FLLLLVCIITFLQHHVFSWMI.

Belongs to the lactate permease family.

It localises to the cell membrane. Its function is as follows. Is the principal permease for the uptake of L-lactate in B.subtilis. The chain is L-lactate permease (lutP) from Bacillus subtilis (strain 168).